Here is a 492-residue protein sequence, read N- to C-terminus: Probable glycogen synthase 2 (492 aa).

An ADP-alpha-D-glucose-binding site is contributed by Lys15.

It belongs to the glycosyltransferase 1 family. Bacterial/plant glycogen synthase subfamily.

The catalysed reaction is [(1-&gt;4)-alpha-D-glucosyl](n) + ADP-alpha-D-glucose = [(1-&gt;4)-alpha-D-glucosyl](n+1) + ADP + H(+). The protein operates within glycan biosynthesis; glycogen biosynthesis. Functionally, synthesizes alpha-1,4-glucan chains using ADP-glucose. The chain is Probable glycogen synthase 2 (glgA2) from Nostoc sp. (strain PCC 7120 / SAG 25.82 / UTEX 2576).